Reading from the N-terminus, the 715-residue chain is Fatty acid oxidation complex subunit alpha (715 aa).

Residues 1 to 194 are enoyl-CoA hydratase; the sequence is MHEQRAKPSA…RLGLVDDAVP (194 aa). Residues 310–715 are 3-hydroxyacyl-CoA dehydrogenase; it reads HALHRIGILG…QGERFYPQGS (406 aa).

The protein in the N-terminal section; belongs to the enoyl-CoA hydratase/isomerase family. This sequence in the central section; belongs to the 3-hydroxyacyl-CoA dehydrogenase family. As to quaternary structure, heterotetramer of two alpha chains (FadJ) and two beta chains (FadI).

It localises to the cytoplasm. The catalysed reaction is a (3S)-3-hydroxyacyl-CoA = a (2E)-enoyl-CoA + H2O. The enzyme catalyses a 4-saturated-(3S)-3-hydroxyacyl-CoA = a (3E)-enoyl-CoA + H2O. It carries out the reaction a (3S)-3-hydroxyacyl-CoA + NAD(+) = a 3-oxoacyl-CoA + NADH + H(+). It catalyses the reaction (3S)-3-hydroxybutanoyl-CoA = (3R)-3-hydroxybutanoyl-CoA. It participates in lipid metabolism; fatty acid beta-oxidation. Catalyzes the formation of a hydroxyacyl-CoA by addition of water on enoyl-CoA. Also exhibits 3-hydroxyacyl-CoA epimerase and 3-hydroxyacyl-CoA dehydrogenase activities. This chain is Fatty acid oxidation complex subunit alpha, found in Serratia proteamaculans (strain 568).